The sequence spans 386 residues: Succinate--CoA ligase [ADP-forming] subunit beta (386 aa).

The 236-residue stretch at 9–244 (KEILRNFGVP…LDEEDPAEVE (236 aa)) folds into the ATP-grasp domain. ATP-binding positions include Lys46, 53-55 (GRG), Glu99, Ala102, and Glu107. Mg(2+) is bound by residues Asn199 and Asp213. Substrate is bound by residues Asn264 and 321-323 (GIM).

It belongs to the succinate/malate CoA ligase beta subunit family. Heterotetramer of two alpha and two beta subunits. Mg(2+) is required as a cofactor.

The catalysed reaction is succinate + ATP + CoA = succinyl-CoA + ADP + phosphate. The enzyme catalyses GTP + succinate + CoA = succinyl-CoA + GDP + phosphate. The protein operates within carbohydrate metabolism; tricarboxylic acid cycle; succinate from succinyl-CoA (ligase route): step 1/1. Its function is as follows. Succinyl-CoA synthetase functions in the citric acid cycle (TCA), coupling the hydrolysis of succinyl-CoA to the synthesis of either ATP or GTP and thus represents the only step of substrate-level phosphorylation in the TCA. The beta subunit provides nucleotide specificity of the enzyme and binds the substrate succinate, while the binding sites for coenzyme A and phosphate are found in the alpha subunit. This chain is Succinate--CoA ligase [ADP-forming] subunit beta, found in Polaromonas naphthalenivorans (strain CJ2).